A 144-amino-acid polypeptide reads, in one-letter code: SsrA-binding protein (144 aa).

This sequence belongs to the SmpB family.

Its subcellular location is the cytoplasm. Its function is as follows. Required for rescue of stalled ribosomes mediated by trans-translation. Binds to transfer-messenger RNA (tmRNA), required for stable association of tmRNA with ribosomes. tmRNA and SmpB together mimic tRNA shape, replacing the anticodon stem-loop with SmpB. tmRNA is encoded by the ssrA gene; the 2 termini fold to resemble tRNA(Ala) and it encodes a 'tag peptide', a short internal open reading frame. During trans-translation Ala-aminoacylated tmRNA acts like a tRNA, entering the A-site of stalled ribosomes, displacing the stalled mRNA. The ribosome then switches to translate the ORF on the tmRNA; the nascent peptide is terminated with the 'tag peptide' encoded by the tmRNA and targeted for degradation. The ribosome is freed to recommence translation, which seems to be the essential function of trans-translation. The protein is SsrA-binding protein of Thermus thermophilus (strain ATCC BAA-163 / DSM 7039 / HB27).